We begin with the raw amino-acid sequence, 423 residues long: 58 kDa phosphoprotein (423 aa).

Over residues 46–60 the composition is skewed to basic and acidic residues; the sequence is KMGYEKMKSEDSTEE. The tract at residues 46 to 82 is disordered; that stretch reads KMGYEKMKSEDSTEEKSDEEEEDEEEEEEEEEDDDPE. The segment covering 61–82 has biased composition (acidic residues); it reads KSDEEEEDEEEEEEEEEDDDPE. TPR repeat units follow at residues 113-146, 147-180, and 181-214; these read ICKL…GNPS, AMIY…NVDS, and ANAY…DYDE. The disordered stretch occupies residues 260 to 301; sequence KKKAEKMYKENNKRENYDSDSSDSSYSEPDFSGDFPGGMPGG. A compositionally biased stretch (basic and acidic residues) spans 264-276; sequence EKMYKENNKRENY. Positions 292 to 362 are 19 X 3-4 AA approximate repeats; it reads GDFPGGMPGG…GMPGMPGGMP (71 aa). One can recognise an STI1 domain in the interval 361-423; sequence MPDLNSPEMK…GGMMGEKPKP (63 aa).

Its subcellular location is the cytoplasm. May play a role in protein folding or protein-protein interactions. May act as a co-chaperone. In Plasmodium berghei, this protein is 58 kDa phosphoprotein.